A 456-amino-acid polypeptide reads, in one-letter code: Histidine--tRNA ligase (456 aa).

Polar residues predominate over residues 1–11 (MTQNENPSAQS). The disordered stretch occupies residues 1 to 22 (MTQNENPSAQSGAKPEDKARPA).

The protein belongs to the class-II aminoacyl-tRNA synthetase family. Homodimer.

Its subcellular location is the cytoplasm. It catalyses the reaction tRNA(His) + L-histidine + ATP = L-histidyl-tRNA(His) + AMP + diphosphate + H(+). The polypeptide is Histidine--tRNA ligase (Cupriavidus pinatubonensis (strain JMP 134 / LMG 1197) (Cupriavidus necator (strain JMP 134))).